A 438-amino-acid polypeptide reads, in one-letter code: Xylose isomerase (438 aa).

Active-site residues include H100 and D103. Residues E231, E267, H270, D295, D306, D308, and D338 each contribute to the Mg(2+) site.

The protein belongs to the xylose isomerase family. As to quaternary structure, homotetramer. Mg(2+) is required as a cofactor.

The protein localises to the cytoplasm. The enzyme catalyses alpha-D-xylose = alpha-D-xylulofuranose. This is Xylose isomerase (xylA) from Thermoanaerobacter pseudethanolicus (strain ATCC 33223 / 39E) (Clostridium thermohydrosulfuricum).